Here is a 310-residue protein sequence, read N- to C-terminus: Oxygen-dependent coproporphyrinogen-III oxidase (310 aa).

Residue serine 97 coordinates substrate. A divalent metal cation is bound by residues histidine 101 and histidine 111. Histidine 111 serves as the catalytic Proton donor. Residue 113–115 (NFR) participates in substrate binding. Residues histidine 150 and histidine 180 each coordinate a divalent metal cation. Residues 245–280 (YVEFNLLYDRGTRFGLEFGGRTESILMSLPPRVVWR) are important for dimerization. 263 to 265 (GGR) contacts substrate.

Belongs to the aerobic coproporphyrinogen-III oxidase family. In terms of assembly, homodimer. The cofactor is a divalent metal cation.

It localises to the cytoplasm. It carries out the reaction coproporphyrinogen III + O2 + 2 H(+) = protoporphyrinogen IX + 2 CO2 + 2 H2O. The protein operates within porphyrin-containing compound metabolism; protoporphyrin-IX biosynthesis; protoporphyrinogen-IX from coproporphyrinogen-III (O2 route): step 1/1. Functionally, involved in the heme biosynthesis. Catalyzes the aerobic oxidative decarboxylation of propionate groups of rings A and B of coproporphyrinogen-III to yield the vinyl groups in protoporphyrinogen-IX. In Coxiella burnetii (strain RSA 493 / Nine Mile phase I), this protein is Oxygen-dependent coproporphyrinogen-III oxidase.